A 481-amino-acid polypeptide reads, in one-letter code: Keratin, type II cuticular Hb1 (481 aa).

Residues 1–106 (MTCGSGFCGR…PNAQCVKHEE (106 aa)) form a head region. An IF rod domain is found at 106–417 (EKEQIKCLNS…RLLEGEEQRL (312 aa)). The coil 1A stretch occupies residues 107–141 (KEQIKCLNSKFAAFIDKVRFLEQQNKLLETKWQFY). A linker 1 region spans residues 142–151 (QNRKCCESNM). Residues 152–252 (EPLFEGYIEA…YDEETRILHS (101 aa)) form a coil 1B region. K212 is covalently cross-linked (Glycyl lysine isopeptide (Lys-Gly) (interchain with G-Cter in SUMO1)). A linker 12 region spans residues 253–269 (HISDTSIVVKMDNSRDL). The segment at 270 to 413 (NMDCVVAEIK…TTYRRLLEGE (144 aa)) is coil 2. Positions 414–481 (EQRLCEGVGA…GSAVSCGRKC (68 aa)) are tail.

It belongs to the intermediate filament family. In terms of assembly, heterotetramer of two type I and two type II keratins. In terms of tissue distribution, expressed in dorsal skin.

In Mus musculus (Mouse), this protein is Keratin, type II cuticular Hb1.